The chain runs to 460 residues: Cysteine--tRNA ligase (460 aa).

Cys-28 serves as a coordination point for Zn(2+). The short motif at 30–40 is the 'HIGH' region element; that stretch reads VTIYDLCHIGH. Cys-209, His-234, and Glu-238 together coordinate Zn(2+). Residues 266–270 carry the 'KMSKS' region motif; it reads KMSKS. ATP is bound at residue Lys-269.

Belongs to the class-I aminoacyl-tRNA synthetase family. Monomer. Zn(2+) serves as cofactor.

The protein resides in the cytoplasm. The catalysed reaction is tRNA(Cys) + L-cysteine + ATP = L-cysteinyl-tRNA(Cys) + AMP + diphosphate. This chain is Cysteine--tRNA ligase, found in Vibrio vulnificus (strain YJ016).